The following is a 382-amino-acid chain: GDP-mannose 4,6 dehydratase 2 (382 aa).

NADP(+) contacts are provided by residues Gly-40–Asp-45, Asp-97–Met-98, Leu-119–Ser-123, and Tyr-134. Thr-166 is a catalytic residue. Catalysis depends on nucleophile residues Glu-168 and Tyr-190. Lys-194, His-220, and Arg-225 together coordinate NADP(+).

Belongs to the NAD(P)-dependent epimerase/dehydratase family. GDP-mannose 4,6-dehydratase subfamily. NADP(+) serves as cofactor.

It carries out the reaction GDP-alpha-D-mannose = GDP-4-dehydro-alpha-D-rhamnose + H2O. Its pathway is nucleotide-sugar biosynthesis; GDP-L-fucose biosynthesis via de novo pathway; GDP-L-fucose from GDP-alpha-D-mannose: step 1/2. Functionally, catalyzes the conversion of GDP-D-mannose to GDP-4-dehydro-6-deoxy-D-mannose. This chain is GDP-mannose 4,6 dehydratase 2 (gmd-2), found in Caenorhabditis elegans.